The primary structure comprises 208 residues: Fibroblast growth factor 6 (208 aa).

An N-terminal signal peptide occupies residues 1-37 (MALGQKLFITMSRGAGRLQGTLWALVFLGILVGMVVP). Asparagine 45 is a glycosylation site (N-linked (GlcNAc...) asparagine). Residues cysteine 90 and cysteine 157 are joined by a disulfide bond.

It belongs to the heparin-binding growth factors family. As to quaternary structure, interacts with FGFR1, FGFR2 and FGFR4. Affinity between fibroblast growth factors (FGFs) and their receptors is increased by heparan sulfate glycosaminoglycans that function as coreceptors. In terms of tissue distribution, leukemia cell lines with platelet/ megakaryocytic differentiation potential.

The protein resides in the secreted. It localises to the extracellular space. In terms of biological role, plays an important role in the regulation of cell proliferation, cell differentiation, angiogenesis and myogenesis, and is required for normal muscle regeneration. The polypeptide is Fibroblast growth factor 6 (FGF6) (Homo sapiens (Human)).